Here is a 60-residue protein sequence, read N- to C-terminus: Large ribosomal subunit protein uL30 (60 aa).

The protein belongs to the universal ribosomal protein uL30 family. In terms of assembly, part of the 50S ribosomal subunit.

This is Large ribosomal subunit protein uL30 from Streptococcus mutans serotype c (strain ATCC 700610 / UA159).